A 296-amino-acid polypeptide reads, in one-letter code: L-fucono-1,5-lactonase (296 aa).

It belongs to the metallo-dependent hydrolases superfamily. Monomer. The cofactor is Does not require a divalent metal for activity. The purified enzyme contains Zn(2+), but the addition of chelators does not diminish the catalytic activity of the enzyme, indicating that it does not require a divalent cation for substrate turnover..

The catalysed reaction is L-fucono-1,5-lactone + H2O = L-fuconate + H(+). It catalyses the reaction L-fucono-1,4-lactone + H2O = L-fuconate + H(+). The enzyme catalyses D-arabinono-1,4-lactone + H2O = D-arabinonate + H(+). It carries out the reaction L-xylono-1,4-lactone + H2O = L-xylonate + H(+). The catalysed reaction is L-galactono-1,4-lactone + H2O = L-galactonate + H(+). The protein operates within carbohydrate degradation; L-fucose degradation. Its function is as follows. L-fucono-1,5-lactonase involved in an L-fucose degradation pathway. Catalyzes the hydrolysis of L-fucono-1,5-lactone to L-fuconate. L-fucono-1,5-lactone is the best substrate, but the enzyme can also hydrolyze L-fucono-1,4-lactone, L-galactono-1,4-lactone D-arabinono-1,4-lactone and L-xylono-1,4-lactone. This Burkholderia multivorans (strain ATCC 17616 / 249) protein is L-fucono-1,5-lactonase.